We begin with the raw amino-acid sequence, 255 residues long: MNILIANDDGVFAPGIQALADALKPLGRVVVVAPESERSGFSSALTLDRPLRPIQIAEDVWAVNGTPADCVYLSMNGLFDFEFDLVVSGINSGANLGDDVLYSGTVGAAFEGRLMKQPAIAVSLAGPDVRSYDHKDDYAQAAKWVHDFIAKGLPALPPRHIFNINIPDVPQLKGTQITYQGRRAQSKPITSHVDPRGRQVYWIGLAGEAVTDPQRIASQIQSDFFAVANSFVSVTPIQMDATNYAVLEDLQASLG.

Residues Asp-8, Asp-9, Ser-39, and Asn-91 each contribute to the a divalent metal cation site.

It belongs to the SurE nucleotidase family. A divalent metal cation is required as a cofactor.

The protein resides in the cytoplasm. It catalyses the reaction a ribonucleoside 5'-phosphate + H2O = a ribonucleoside + phosphate. Nucleotidase that shows phosphatase activity on nucleoside 5'-monophosphates. In Acinetobacter baumannii (strain ATCC 17978 / DSM 105126 / CIP 53.77 / LMG 1025 / NCDC KC755 / 5377), this protein is 5'-nucleotidase SurE.